The chain runs to 655 residues: Large subunit GTPase 1 homolog (655 aa).

Residues 1–31 (MGRRRAPGGGSLGRVLIRHQTQRSRSHRHTD) are disordered. The segment covering 16-28 (LIRHQTQRSRSHR) has biased composition (basic residues). Phosphoserine is present on residues S93 and S97. Positions 164–441 (WRQLWRVIER…LCDCPGLVMP (278 aa)) constitute a CP-type G domain. Position 212-215 (212-215 (NKAD)) interacts with GTP. S252 carries the post-translational modification Phosphoserine. Residues 253–359 (KDEVNSVAGE…ENSQMSNKSH (107 aa)) are disordered. A compositionally biased stretch (acidic residues) spans 288–327 (EESESDDDDSEYEDCQEDEEEDWQTCSEEDSNPEEGQEEG). Basic and acidic residues predominate over residues 328 to 339 (GCDRDQKEHGPE). The segment covering 344-359 (QSRASPENSQMSNKSH) has biased composition (polar residues). GTP is bound by residues 390 to 397 (GYPNVGKS) and 434 to 437 (DCPG). The disordered stretch occupies residues 625 to 655 (SAENVPGKPWKKHGNRNKKEKSRRLYRHLDV). Residues 633–655 (PWKKHGNRNKKEKSRRLYRHLDV) show a composition bias toward basic residues.

This sequence belongs to the TRAFAC class YlqF/YawG GTPase family. LSG1 subfamily.

The protein localises to the cytoplasm. It is found in the endoplasmic reticulum. Its subcellular location is the nucleus. It localises to the cajal body. It carries out the reaction GTP + H2O = GDP + phosphate + H(+). In terms of biological role, functions as a GTPase. May act by mediating the release of NMD3 from the 60S ribosomal subunit after export into the cytoplasm during the 60S ribosomal subunit maturation. The chain is Large subunit GTPase 1 homolog from Rattus norvegicus (Rat).